A 467-amino-acid chain; its full sequence is Glycine--tRNA ligase (467 aa).

Residues arginine 100 and glutamate 175 each coordinate substrate. Residues 207–209 (RNE), 217–222 (FRTREF), 291–292 (EL), and 335–338 (GADR) contribute to the ATP site. 222–226 (FEQME) contributes to the substrate binding site. Residue 331 to 335 (EPSLG) participates in substrate binding.

This sequence belongs to the class-II aminoacyl-tRNA synthetase family. As to quaternary structure, homodimer.

It is found in the cytoplasm. It catalyses the reaction tRNA(Gly) + glycine + ATP = glycyl-tRNA(Gly) + AMP + diphosphate. Its function is as follows. Catalyzes the attachment of glycine to tRNA(Gly). In Clostridium perfringens (strain 13 / Type A), this protein is Glycine--tRNA ligase.